Here is a 648-residue protein sequence, read N- to C-terminus: Mitotic interactor and substrate of PLK1 (648 aa).

Residue Ser-77 is modified to Phosphoserine; by CDK1. Phosphothreonine occurs at positions 149 and 190. Phosphoserine is present on Ser-220. Disordered regions lie at residues 242-383 (VNDP…PEAR) and 430-460 (KATE…GKAT). At Ser-253 the chain carries Phosphoserine; by CDK1. Positions 255–281 (ETPKETPIEREIRLAQEREAELREQRG) are enriched in basic and acidic residues. Thr-256 is modified (phosphothreonine; by CDK1). Ser-318 bears the Phosphoserine mark. The span at 325–339 (MVQETQREEDHRREG) shows a compositional bias: basic and acidic residues. Thr-347 is subject to Phosphothreonine; by CDK1. Residues 349–367 (DWPSQDPQPGLQRSLSSDC) are compositionally biased toward polar residues. A phosphoserine mark is found at Ser-352 and Ser-364. Residues Ser-365 and Ser-439 each carry the phosphoserine; by PLK1 modification. Residues 440–450 (ESSGRSLSSKQ) show a composition bias toward polar residues. Ser-507 and Ser-509 each carry phosphoserine. Residues 511-534 (DLLEREMESVLRREREVAEERRNA) are a coiled coil. Residues 539-568 (VFSPVPAEDESHEQDSRSSSRASGITGSYS) are disordered. Ser-541 is subject to Phosphoserine; by CDK1. Residue Ser-554 is modified to Phosphoserine; by PLK1. Residues 557 to 568 (SSRASGITGSYS) show a composition bias toward polar residues. Ser-644 is subject to Phosphoserine.

Belongs to the MISP family. In terms of assembly, associates with F-actin. Interacts with DCTN1; this interaction regulates DCTN1 distribution at the cell cortex. Interacts with PTK2/FAK and MAPRE1. Post-translationally, phosphorylated by CDK1 and PLK1. CDK1 is the priming kinase for PLK1 phosphorylation. Phosphorylation by PLK1 is required for proper spindle orientation at metaphase.

The protein resides in the cell junction. It is found in the focal adhesion. It localises to the cytoplasm. Its subcellular location is the cytoskeleton. The protein localises to the cell cortex. In terms of biological role, plays a role in mitotic spindle orientation and mitotic progression. Regulates the distribution of dynactin at the cell cortex in a PLK1-dependent manner, thus stabilizing cortical and astral microtubule attachments required for proper mitotic spindle positioning. May link microtubules to the actin cytoskeleton and focal adhesions. May be required for directed cell migration and centrosome orientation. May also be necessary for proper stacking of the Golgi apparatus. The sequence is that of Mitotic interactor and substrate of PLK1 from Mus musculus (Mouse).